Consider the following 680-residue polypeptide: Chondroitin proteoglycan 4 (680 aa).

A signal peptide spans 1-18; that stretch reads MLRVNLLILLCFVPFSLN. N-linked (GlcNAc...) asparagine glycosylation is found at Asn-42, Asn-59, Asn-72, Asn-167, Asn-205, Asn-458, Asn-472, Asn-486, Asn-498, Asn-526, Asn-527, Asn-556, and Asn-604. The disordered stretch occupies residues 460-680; the sequence is TKKAETTKKS…PLTTTLHELY (221 aa). The segment covering 484 to 500 has biased composition (low complexity); it reads AANTTAETTKTTSANIT. A compositionally biased stretch (polar residues) spans 520–530; the sequence is SLDTSGNNSTV. 2 stretches are compositionally biased toward low complexity: residues 633–647 and 654–669; these read GEAS…SGEV and SGYS…SSGE. 2 O-linked (Xyl...) (chondroitin sulfate) serine glycosylation sites follow: Ser-640 and Ser-644. The N-linked (GlcNAc...) asparagine glycan is linked to Asn-664.

The protein is Chondroitin proteoglycan 4 (cpg-4) of Caenorhabditis briggsae.